Here is a 502-residue protein sequence, read N- to C-terminus: NADH-quinone oxidoreductase subunit N (502 aa).

Helical transmembrane passes span 16–36, 47–67, 85–105, 113–133, 138–158, 172–192, 213–233, 248–268, 273–293, 310–330, 337–357, 387–407, 410–430, and 470–490; these read TLVP…IDLF, MLSL…AGVF, LAIL…PLAL, FSYP…QFMV, LILI…LIAM, FTMG…FYAL, IGFV…KLSM, SAAL…IVAM, FLIH…VVVT, MLAY…LIGT, LFLY…MLWI, ASIM…ALFW, MYLM…IMAL, and TIIG…NQLI.

The protein belongs to the complex I subunit 2 family. As to quaternary structure, NDH-1 is composed of 14 different subunits. Subunits NuoA, H, J, K, L, M, N constitute the membrane sector of the complex.

The protein localises to the cell inner membrane. It carries out the reaction a quinone + NADH + 5 H(+)(in) = a quinol + NAD(+) + 4 H(+)(out). NDH-1 shuttles electrons from NADH, via FMN and iron-sulfur (Fe-S) centers, to quinones in the respiratory chain. The immediate electron acceptor for the enzyme in this species is believed to be ubiquinone. Couples the redox reaction to proton translocation (for every two electrons transferred, four hydrogen ions are translocated across the cytoplasmic membrane), and thus conserves the redox energy in a proton gradient. The protein is NADH-quinone oxidoreductase subunit N of Sulfurimonas denitrificans (strain ATCC 33889 / DSM 1251) (Thiomicrospira denitrificans (strain ATCC 33889 / DSM 1251)).